The sequence spans 462 residues: tRNA(Ile2) 2-agmatinylcytidine synthetase TiaS (462 aa).

The protein belongs to the TiaS family.

The protein resides in the cytoplasm. It carries out the reaction cytidine(34) in tRNA(Ile2) + agmatine + ATP + H2O = 2-agmatinylcytidine(34) in tRNA(Ile2) + AMP + 2 phosphate + 2 H(+). ATP-dependent agmatine transferase that catalyzes the formation of 2-agmatinylcytidine (agm2C) at the wobble position (C34) of tRNA(Ile2), converting the codon specificity from AUG to AUA. The sequence is that of tRNA(Ile2) 2-agmatinylcytidine synthetase TiaS from Haloquadratum walsbyi (strain DSM 16790 / HBSQ001).